The chain runs to 535 residues: ABC1 family protein C10F6.14c (535 aa).

This sequence belongs to the protein kinase superfamily. ADCK protein kinase family.

The sequence is that of ABC1 family protein C10F6.14c from Schizosaccharomyces pombe (strain 972 / ATCC 24843) (Fission yeast).